The sequence spans 150 residues: Large ribosomal subunit protein uL16 (150 aa).

This sequence belongs to the universal ribosomal protein uL16 family. As to quaternary structure, component of the small ribosomal subunit. Mature ribosomes consist of a small (40S) and a large (60S) subunit. The 40S subunit contains about 33 different proteins and 1 molecule of RNA (18S). The 60S subunit contains about 49 different proteins and 3 molecules of RNA (25S, 5.8S and 5S).

In Nicotiana tabacum (Common tobacco), this protein is Large ribosomal subunit protein uL16 (RPL10).